We begin with the raw amino-acid sequence, 178 residues long: Ribosome maturation factor RimP (178 aa).

It belongs to the RimP family.

It is found in the cytoplasm. Functionally, required for maturation of 30S ribosomal subunits. The polypeptide is Ribosome maturation factor RimP (Streptococcus pyogenes serotype M4 (strain MGAS10750)).